The following is a 230-amino-acid chain: Eukaryotic translation initiation factor 4E-1 (230 aa).

The disordered stretch occupies residues 1 to 53 (MVVEDSQKSTITDEQNPSRVDNDDDDLEDGEILEDADDAASAASKPPSAFLRN). The span at 8–19 (KSTITDEQNPSR) shows a compositional bias: polar residues. The segment covering 22–38 (NDDDDLEDGEILEDADD) has biased composition (acidic residues). The span at 39–49 (AASAASKPPSA) shows a compositional bias: low complexity. EIF4G-binding regions lie at residues 55–58 (HPLE) and 65–101 (FDNP…NNIH). MRNA contacts are provided by residues 73–78 (KQAAWG), Lys-105, and 123–124 (WE). An intrachain disulfide couples Cys-128 to Cys-166. Residues 149-158 (YTLLAMIGEQ) form an EIF4G-binding region. MRNA-binding positions include 173–178 (RNRQDK) and 218–222 (KKHER).

It belongs to the eukaryotic initiation factor 4E family. In terms of assembly, EIF4F is a multi-subunit complex, the composition of which varies with external and internal environmental conditions. It is composed of at least EIF4A, EIF4E and EIF4G. EIF4E is also known to interact with other partners. In higher plants two isoforms of EIF4F have been identified, named isoform EIF4F and isoform EIF(iso)4F. Isoform EIF4F has subunits p220 and p26, whereas isoform EIF(iso)4F has subunits p82 and p28. (Microbial infection) Interacts with potyvirus viral genome-linked protein (VPg); this interaction is possible in susceptible hosts but impaired in resistant plants. In terms of processing, according to the redox status, the Cys-128-Cys-166 disulfide bridge may have a role in regulating protein function by affecting its ability to bind capped mRNA.

It is found in the nucleus. Its subcellular location is the cytoplasm. Functionally, component of the protein complex eIF4F, which is involved in the recognition of the mRNA cap, ATP-dependent unwinding of 5'-terminal secondary structure and recruitment of mRNA to the ribosome. Recognizes and binds the 7-methylguanosine-containing mRNA cap during an early step in the initiation of protein synthesis and facilitates ribosome binding by inducing the unwinding of the mRNAs secondary structures. Key component of recessive resistance to potyviruses. Its function is as follows. (Microbial infection) Susceptibility host factor required for viral infection by recruiting viral RNAs to the host ribosomal complex via an interaction with viral genome-linked protein (VPg). The protein is Eukaryotic translation initiation factor 4E-1 of Phaseolus vulgaris (Kidney bean).